Consider the following 445-residue polypeptide: MKLFGTDGVRGKAGEFLDSFLAMRLAMAAGIYFKDKSITNNILVGKDTRRSGYMIENAIVSGLTSIGYNVIQIGPMPTPAIAFLTEDMRCDAGIMISASHNPYYDNGIKFFDAHGNKLSEDIEKKIEEIYFDDKLIQASKVDMEKIGQAKRIDDVIGRYIVSIKNSFPKDLTLKSLRVVLDVAHGAAYKVAPTVFKELGAEVIVMSDKPNGLNINENCGALHPANLAAEVKRLRADVGFAFDGDADRLVVVDEKGEVANGDSLLGVLALYLKEQGKLQSSVVATIMSNGALKEFLNKHGIELDTCNVGDKYVLEKLKANGGNFGGEQSGHIIFSDYAKTGDGLIAALQFSALMLSKKKSASSILGQVKPYPQLLTNLKIAEKKDLDKIKGLKELKKDLENKNINTLFRYSGTENLIRLLLEAKDIKLLEKEMKNVVEFFKKALNG.

S99 acts as the Phosphoserine intermediate in catalysis. Residues S99, D242, D244, and D246 each coordinate Mg(2+). Position 99 is a phosphoserine (S99).

The protein belongs to the phosphohexose mutase family. Mg(2+) serves as cofactor. In terms of processing, activated by phosphorylation.

The catalysed reaction is alpha-D-glucosamine 1-phosphate = D-glucosamine 6-phosphate. Catalyzes the conversion of glucosamine-6-phosphate to glucosamine-1-phosphate. This chain is Phosphoglucosamine mutase, found in Campylobacter jejuni subsp. jejuni serotype O:23/36 (strain 81-176).